The chain runs to 449 residues: CCA-adding enzyme (449 aa).

Residues serine 57 and arginine 60 each coordinate ATP. CTP contacts are provided by serine 57 and arginine 60. Residues aspartate 69, aspartate 71, and aspartate 124 each contribute to the Mg(2+) site. The ATP site is built by histidine 147, lysine 167, and tyrosine 176. The CTP site is built by histidine 147, lysine 167, and tyrosine 176.

The protein belongs to the tRNA nucleotidyltransferase/poly(A) polymerase family. Archaeal CCA-adding enzyme subfamily. Homodimer. The cofactor is Mg(2+).

It carries out the reaction a tRNA precursor + 2 CTP + ATP = a tRNA with a 3' CCA end + 3 diphosphate. It catalyses the reaction a tRNA with a 3' CCA end + 2 CTP + ATP = a tRNA with a 3' CCACCA end + 3 diphosphate. Catalyzes the addition and repair of the essential 3'-terminal CCA sequence in tRNAs without using a nucleic acid template. Adds these three nucleotides in the order of C, C, and A to the tRNA nucleotide-73, using CTP and ATP as substrates and producing inorganic pyrophosphate. tRNA 3'-terminal CCA addition is required both for tRNA processing and repair. Also involved in tRNA surveillance by mediating tandem CCA addition to generate a CCACCA at the 3' terminus of unstable tRNAs. While stable tRNAs receive only 3'-terminal CCA, unstable tRNAs are marked with CCACCA and rapidly degraded. The polypeptide is CCA-adding enzyme (Methanocaldococcus jannaschii (strain ATCC 43067 / DSM 2661 / JAL-1 / JCM 10045 / NBRC 100440) (Methanococcus jannaschii)).